The primary structure comprises 143 residues: Snake venom vascular endothelial growth factor toxin (143 aa).

Residues 1-24 form the signal peptide; that stretch reads MAVYLLAVAILFCIQGWPSGTVQG. A Pyrrolidone carboxylic acid (Glu) modification is found at E25. Disulfide bonds link C38-C80, C69-C115, and C73-C117. The tract at residues 117 to 143 is disordered; it reads CRPRSPGDVNDGRNPKEGEPRARFPFV.

It belongs to the PDGF/VEGF growth factor family. Snake venom VEGF subfamily. As to quaternary structure, homodimer; disulfide-linked. Interacts with VEGF receptor-1 (FLT1) with a high affinity, whereas it binds to VEGF receptor-2 (KDR) with a low affinity. Does not bind to VEGFR-3/FLT4 and neuropilin-1 (NRP1). Expressed by the venom gland.

It is found in the secreted. In terms of biological role, snake venom VEGFs may contribute to venom dispersion and prey subjugation by inducing vascular permeability and hypotension. This protein activates the vascular endothelial growth factor receptor-1 (VEGFR-1/FLT1), and consequently promotes the proliferation and tissue factor production of endothelial cells, the neovascularization in the chicken chorioallantoic membrane, and increases vascular permeability. Also stimulates tissue-factor production and human monocyte chemotaxis. The polypeptide is Snake venom vascular endothelial growth factor toxin (Protobothrops mucrosquamatus (Taiwan habu)).